Here is a 308-residue protein sequence, read N- to C-terminus: Ornithine carbamoyltransferase (308 aa).

Residues serine 52–threonine 55, glutamine 79, arginine 103, and histidine 130–glutamine 133 contribute to the carbamoyl phosphate site. L-ornithine-binding positions include asparagine 162, aspartate 224, and serine 228 to methionine 229. Carbamoyl phosphate contacts are provided by residues cysteine 264–leucine 265 and arginine 292.

Belongs to the aspartate/ornithine carbamoyltransferase superfamily. OTCase family.

It localises to the cytoplasm. The catalysed reaction is carbamoyl phosphate + L-ornithine = L-citrulline + phosphate + H(+). It participates in amino-acid biosynthesis; L-arginine biosynthesis; L-arginine from L-ornithine and carbamoyl phosphate: step 1/3. In terms of biological role, reversibly catalyzes the transfer of the carbamoyl group from carbamoyl phosphate (CP) to the N(epsilon) atom of ornithine (ORN) to produce L-citrulline. The polypeptide is Ornithine carbamoyltransferase (Pyrobaculum calidifontis (strain DSM 21063 / JCM 11548 / VA1)).